The primary structure comprises 202 residues: Probable GTP-binding protein EngB (202 aa).

Residues 30-201 enclose the EngB-type G domain; the sequence is NILQIALAGR…WERIQYTIDS (172 aa). GTP-binding positions include 38–45, 65–69, 84–87, 151–154, and 180–182; these read GRSNVGKS, GKTRS, DLPG, TKID, and VSS. 2 residues coordinate Mg(2+): Ser-45 and Thr-67.

The protein belongs to the TRAFAC class TrmE-Era-EngA-EngB-Septin-like GTPase superfamily. EngB GTPase family. The cofactor is Mg(2+).

Functionally, necessary for normal cell division and for the maintenance of normal septation. The protein is Probable GTP-binding protein EngB of Lawsonia intracellularis (strain PHE/MN1-00).